The following is a 347-amino-acid chain: GPN-loop GTPase 2 (347 aa).

Glycine 12–threonine 17 is a binding site for GTP. The Gly-Pro-Asn (GPN)-loop; involved in dimer interface motif lies at glycine 69–asparagine 71. GTP is bound at residue serine 175 to aspartate 178.

The protein belongs to the GPN-loop GTPase family. Heterodimers with NPA3/GPN1 or GPN3. Binds to RNA polymerase II (RNAPII).

It is found in the cytoplasm. Small GTPase required for proper localization of RNA polymerase II and III (RNAPII and RNAPIII). May act at an RNAP assembly step prior to nuclear import. Required for establishment of sister chromatid cohesion. This chain is GPN-loop GTPase 2, found in Saccharomyces cerevisiae (strain ATCC 204508 / S288c) (Baker's yeast).